A 1377-amino-acid polypeptide reads, in one-letter code: DNA-directed RNA polymerase subunit beta (1377 aa).

The protein belongs to the RNA polymerase beta chain family. The RNAP catalytic core consists of 2 alpha, 1 beta, 1 beta' and 1 omega subunit. When a sigma factor is associated with the core the holoenzyme is formed, which can initiate transcription.

The enzyme catalyses RNA(n) + a ribonucleoside 5'-triphosphate = RNA(n+1) + diphosphate. Its function is as follows. DNA-dependent RNA polymerase catalyzes the transcription of DNA into RNA using the four ribonucleoside triphosphates as substrates. This chain is DNA-directed RNA polymerase subunit beta, found in Azoarcus sp. (strain BH72).